A 418-amino-acid chain; its full sequence is Gamma-glutamyl phosphate reductase (418 aa).

Belongs to the gamma-glutamyl phosphate reductase family.

Its subcellular location is the cytoplasm. It carries out the reaction L-glutamate 5-semialdehyde + phosphate + NADP(+) = L-glutamyl 5-phosphate + NADPH + H(+). It functions in the pathway amino-acid biosynthesis; L-proline biosynthesis; L-glutamate 5-semialdehyde from L-glutamate: step 2/2. In terms of biological role, catalyzes the NADPH-dependent reduction of L-glutamate 5-phosphate into L-glutamate 5-semialdehyde and phosphate. The product spontaneously undergoes cyclization to form 1-pyrroline-5-carboxylate. This chain is Gamma-glutamyl phosphate reductase, found in Lacticaseibacillus casei (strain BL23) (Lactobacillus casei).